We begin with the raw amino-acid sequence, 467 residues long: tRNA dimethylallyltransferase (467 aa).

The N-terminal 47 residues, 1–47 (MASVAAARAVPVGSGLRGLQRTLPLVVILGATGTGKSTLALQLGQRL), are a transit peptide targeting the mitochondrion. 32-37 (TGTGKS) serves as a coordination point for dimethylallyl diphosphate. 2 interaction with substrate tRNA regions span residues 55 to 58 (DSMQ) and 183 to 187 (RKVAR). The core aggregation region stretch occupies residues 221-230 (FSNPCILWLH). An interaction with isopentenylpyrophosphate transferase region spans residues 233-255 (QAVLDERLDKRVDDMLAAGLLEE). Interaction with substrate tRNA regions lie at residues 281-283 (QSI) and 313-331 (ALKQVTKRYARKQNRWVKN). Residues 395-425 (HLCDLCDRIIIGDREWAAHIKSKSHLNQLKK) form a Matrin-type zinc finger. The segment at 429-467 (LDSDAVNTIESQSVSPDHNKEPKEKGSPGQNDQELKCSV) is disordered. Polar residues predominate over residues 433-444 (AVNTIESQSVSP). At Ser-443 the chain carries Phosphoserine. The segment covering 445 to 454 (DHNKEPKEKG) has biased composition (basic and acidic residues). Ser-455 is subject to Phosphoserine.

Belongs to the IPP transferase family.

The protein resides in the mitochondrion. The protein localises to the cytoplasm. It catalyses the reaction adenosine(37) in tRNA + dimethylallyl diphosphate = N(6)-dimethylallyladenosine(37) in tRNA + diphosphate. Its function is as follows. Catalyzes the transfer of a dimethylallyl group onto the adenine at position 37 of both cytosolic and mitochondrial tRNAs, leading to the formation of N6-(dimethylallyl)adenosine (i6A37). Mediates modification of a limited subset of tRNAs: tRNA(Ser)(AGA), tRNA(Ser)(CGA), tRNA(Ser)(UGA), as well as partial modification of the selenocysteine tRNA(Ser)(UCA). TRIT1 is therefore required for selenoprotein expression. The sequence is that of tRNA dimethylallyltransferase (TRIT1) from Homo sapiens (Human).